The primary structure comprises 275 residues: Formamidopyrimidine-DNA glycosylase (275 aa).

The active-site Schiff-base intermediate with DNA is the P2. Residue E3 is the Proton donor of the active site. K59 serves as the catalytic Proton donor; for beta-elimination activity. Positions 92, 111, and 155 each coordinate DNA. The segment at 240–274 (NVYGRAGKACPKCGTTIEKQVLGQRSSYYCPQCQR) adopts an FPG-type zinc-finger fold. R264 (proton donor; for delta-elimination activity) is an active-site residue.

This sequence belongs to the FPG family. In terms of assembly, monomer. Zn(2+) serves as cofactor.

The enzyme catalyses Hydrolysis of DNA containing ring-opened 7-methylguanine residues, releasing 2,6-diamino-4-hydroxy-5-(N-methyl)formamidopyrimidine.. It catalyses the reaction 2'-deoxyribonucleotide-(2'-deoxyribose 5'-phosphate)-2'-deoxyribonucleotide-DNA = a 3'-end 2'-deoxyribonucleotide-(2,3-dehydro-2,3-deoxyribose 5'-phosphate)-DNA + a 5'-end 5'-phospho-2'-deoxyribonucleoside-DNA + H(+). Its function is as follows. Involved in base excision repair of DNA damaged by oxidation or by mutagenic agents. Acts as a DNA glycosylase that recognizes and removes damaged bases. Has a preference for oxidized purines, such as 7,8-dihydro-8-oxoguanine (8-oxoG). Has AP (apurinic/apyrimidinic) lyase activity and introduces nicks in the DNA strand. Cleaves the DNA backbone by beta-delta elimination to generate a single-strand break at the site of the removed base with both 3'- and 5'-phosphates. The chain is Formamidopyrimidine-DNA glycosylase from Magnetococcus marinus (strain ATCC BAA-1437 / JCM 17883 / MC-1).